Consider the following 502-residue polypeptide: Membrane protein insertase YidC (502 aa).

Helical transmembrane passes span 12–32 (FLIF…FYIY), 286–306 (LDWG…YWIY), 312–332 (WVLS…PLGY), 382–402 (LPIL…IITV), 409–429 (FLWI…VIMG), and 452–472 (ITSV…VLYW).

This sequence belongs to the OXA1/ALB3/YidC family. Type 1 subfamily. Interacts with the Sec translocase complex via SecD. Specifically interacts with transmembrane segments of nascent integral membrane proteins during membrane integration.

Its subcellular location is the cell membrane. Its function is as follows. Required for the insertion and/or proper folding and/or complex formation of integral membrane proteins into the membrane. Involved in integration of membrane proteins that insert both dependently and independently of the Sec translocase complex, as well as at least some lipoproteins. Aids folding of multispanning membrane proteins. This Aquifex aeolicus (strain VF5) protein is Membrane protein insertase YidC.